The chain runs to 495 residues: Galactose-1-phosphate uridylyltransferase (495 aa).

It belongs to the galactose-1-phosphate uridylyltransferase type 2 family.

The protein resides in the cytoplasm. The catalysed reaction is alpha-D-galactose 1-phosphate + UDP-alpha-D-glucose = alpha-D-glucose 1-phosphate + UDP-alpha-D-galactose. Its pathway is carbohydrate metabolism; galactose metabolism. The polypeptide is Galactose-1-phosphate uridylyltransferase (Ligilactobacillus salivarius (strain UCC118) (Lactobacillus salivarius)).